The following is an 86-amino-acid chain: Protein YwqI (86 aa).

Positions Asp57 to Ile83 form a coiled coil.

The sequence is that of Protein YwqI (ywqI) from Bacillus subtilis (strain 168).